We begin with the raw amino-acid sequence, 400 residues long: Cytochrome b (400 aa).

4 helical membrane passes run 32-52 (FGSL…TLAM), 76-98 (WLIR…LHIG), 113-133 (TWSI…LGYV), and 179-199 (FFSL…MHLI). Positions 82 and 96 each coordinate heme b. Heme b is bound by residues histidine 183 and histidine 197. Histidine 202 is an a ubiquinone binding site. Transmembrane regions (helical) follow at residues 226–246 (YLFK…IFVF), 290–310 (AVGV…PYLD), 322–342 (LSKV…QLGA), and 349–369 (FIVF…IIIP).

This sequence belongs to the cytochrome b family. Fungal cytochrome b-c1 complex contains 10 subunits; 3 respiratory subunits, 2 core proteins and 5 low-molecular weight proteins. Cytochrome b-c1 complex is a homodimer. Heme b serves as cofactor.

The protein localises to the mitochondrion inner membrane. In terms of biological role, component of the ubiquinol-cytochrome c reductase complex (complex III or cytochrome b-c1 complex) that is part of the mitochondrial respiratory chain. The b-c1 complex mediates electron transfer from ubiquinol to cytochrome c. Contributes to the generation of a proton gradient across the mitochondrial membrane that is then used for ATP synthesis. The protein is Cytochrome b (cob) of Epidermophyton floccosum.